A 365-amino-acid chain; its full sequence is Baculoviral IAP repeat-containing protein 7 (365 aa).

2 BIR repeats span residues 7-73 (RQRS…PFLQ) and 115-180 (RLGS…DFLL). The Zn(2+) site is built by C149, C152, H169, and C176. Residues 186–234 (AFIRSVQESFFSSPETSPESVGSYEGSPVSSPGSPPVCPFLSTSVAQGA) are self-inhibits the anti-apoptotic function. At S198 the chain carries Phosphoserine. S202 is subject to Phosphoserine; by MAPK1. S212 is modified (phosphoserine). Phosphoserine; by MAPK1 is present on residues S216 and S219. Residues 278-306 (TESVSVPRAPTQRERPEPPKEPAPPLSTE) form a disordered region. The span at 288–297 (TQRERPEPPK) shows a compositional bias: basic and acidic residues. An RING-type zinc finger spans residues 318–353 (CKVCMDNDVSMVFVPCGHLVVCTECAPNLRHCPICR).

The protein belongs to the IAP family. Post-translationally, auto-ubiquitinated, and degraded in a 2-step mechanism; a caspase-independent first step and a caspase-dependent second step. Phosphorylated via MAPK-dependent and CDK-dependent pathways during oocyte maturation. Phosphorylation does not appear to affect caspase inhibition or autoubiquitination activity.

The protein resides in the cytoplasm. It catalyses the reaction S-ubiquitinyl-[E2 ubiquitin-conjugating enzyme]-L-cysteine + [acceptor protein]-L-lysine = [E2 ubiquitin-conjugating enzyme]-L-cysteine + N(6)-ubiquitinyl-[acceptor protein]-L-lysine.. In terms of biological role, weak apoptotic suppressor. Has E3 ubiquitin-protein ligase activity. Weak inhibitor of caspase activity. This chain is Baculoviral IAP repeat-containing protein 7 (birc7), found in Xenopus tropicalis (Western clawed frog).